Reading from the N-terminus, the 131-residue chain is Arsenate reductase 1 (131 aa).

Catalysis depends on nucleophile residues C10, C82, and C89. 2 disulfides stabilise this stretch: C10-C82 and C82-C89.

Belongs to the low molecular weight phosphotyrosine protein phosphatase family. Thioredoxin-coupled ArsC subfamily.

It localises to the cytoplasm. The enzyme catalyses arsenate + [thioredoxin]-dithiol + H(+) = arsenite + [thioredoxin]-disulfide + H2O. In terms of biological role, catalyzes the reduction of arsenate [As(V)] to arsenite [As(III)]. The polypeptide is Arsenate reductase 1 (Staphylococcus saprophyticus subsp. saprophyticus (strain ATCC 15305 / DSM 20229 / NCIMB 8711 / NCTC 7292 / S-41)).